The following is a 490-amino-acid chain: GTPase Der (490 aa).

2 EngA-type G domains span residues 3-166 (PVVA…MEDL) and 203-376 (IKLA…DSST). GTP contacts are provided by residues 9–16 (GRPNVGKS), 56–60 (DTGGI), 118–121 (NKTD), 209–216 (GRPNVGKS), 256–260 (DTAGV), and 321–324 (NKWD). The KH-like domain occupies 377–461 (RRVGTSMLTR…PIRIQFKEGE (85 aa)).

The protein belongs to the TRAFAC class TrmE-Era-EngA-EngB-Septin-like GTPase superfamily. EngA (Der) GTPase family. As to quaternary structure, associates with the 50S ribosomal subunit.

GTPase that plays an essential role in the late steps of ribosome biogenesis. The protein is GTPase Der of Shigella flexneri serotype 5b (strain 8401).